The sequence spans 306 residues: Protein-L-isoaspartate O-methyltransferase 2 (306 aa).

The segment at 1–82 (MSTTPPRNKF…ASAATAGGGG (82 aa)) is disordered. The span at 38 to 48 (PAAPTPAPAKP) shows a compositional bias: pro residues. The segment covering 54 to 77 (PRTAAPAPAPVPASAVEQRASAAT) has biased composition (low complexity). Ser142 is a catalytic residue.

Belongs to the methyltransferase superfamily. L-isoaspartyl/D-aspartyl protein methyltransferase family.

It is found in the cytoplasm. It carries out the reaction [protein]-L-isoaspartate + S-adenosyl-L-methionine = [protein]-L-isoaspartate alpha-methyl ester + S-adenosyl-L-homocysteine. Catalyzes the methyl esterification of L-isoaspartyl residues in peptides and proteins that result from spontaneous decomposition of normal L-aspartyl and L-asparaginyl residues. It plays a role in the repair and/or degradation of damaged proteins. The polypeptide is Protein-L-isoaspartate O-methyltransferase 2 (Cupriavidus necator (strain ATCC 17699 / DSM 428 / KCTC 22496 / NCIMB 10442 / H16 / Stanier 337) (Ralstonia eutropha)).